The following is a 339-amino-acid chain: Phenylalanine--tRNA ligase alpha subunit (339 aa).

Glu-254 lines the Mg(2+) pocket.

This sequence belongs to the class-II aminoacyl-tRNA synthetase family. Phe-tRNA synthetase alpha subunit type 1 subfamily. In terms of assembly, tetramer of two alpha and two beta subunits. The cofactor is Mg(2+).

The protein localises to the cytoplasm. It carries out the reaction tRNA(Phe) + L-phenylalanine + ATP = L-phenylalanyl-tRNA(Phe) + AMP + diphosphate + H(+). This Clostridium botulinum (strain 657 / Type Ba4) protein is Phenylalanine--tRNA ligase alpha subunit.